Consider the following 1511-residue polypeptide: DNA-directed RNA polymerase subunit beta' (1511 aa).

C75, C77, C90, and C93 together coordinate Zn(2+). 3 residues coordinate Mg(2+): D474, D476, and D478. Positions 804, 878, 885, and 888 each coordinate Zn(2+).

This sequence belongs to the RNA polymerase beta' chain family. As to quaternary structure, the RNAP catalytic core consists of 2 alpha, 1 beta, 1 beta' and 1 omega subunit. When a sigma factor is associated with the core the holoenzyme is formed, which can initiate transcription. Requires Mg(2+) as cofactor. Zn(2+) serves as cofactor.

The catalysed reaction is RNA(n) + a ribonucleoside 5'-triphosphate = RNA(n+1) + diphosphate. DNA-dependent RNA polymerase catalyzes the transcription of DNA into RNA using the four ribonucleoside triphosphates as substrates. This Aliarcobacter butzleri (strain RM4018) (Arcobacter butzleri) protein is DNA-directed RNA polymerase subunit beta'.